Here is a 99-residue protein sequence, read N- to C-terminus: Protein Tat (99 aa).

The tract at residues 1 to 24 (MEVVDPKIDPWNHPGSQPETPCNN) is interaction with human CREBBP. A transactivation region spans residues 1–48 (MEVVDPKIDPWNHPGSQPETPCNNCYCKKCCFHCPLCFMKKGLGISYG). Residues Cys22, Cys25, and Cys27 each contribute to the Zn(2+) site. A cysteine-rich region spans residues 22-37 (CNNCYCKKCCFHCPLC). At Lys28 the chain carries N6-acetyllysine; by host PCAF. Cys30, His33, Cys34, and Cys37 together coordinate Zn(2+). Residues 38–48 (FMKKGLGISYG) are core. Residues 47 to 99 (YGRKKRRQRRRTPQGSKIHQDPVPKQPLSQTRGDPTGPEESKKKVESQTETDP) are disordered. The segment covering 48–58 (GRKKRRQRRRT) has biased composition (basic residues). The Nuclear localization signal, RNA-binding (TAR), and protein transduction signature appears at 49–57 (RKKRRQRRR). The interval 49 to 86 (RKKRRQRRRTPQGSKIHQDPVPKQPLSQTRGDPTGPEE) is interaction with the host capping enzyme RNGTT. Lys50 and Lys51 each carry N6-acetyllysine; by host EP300 and GCN5L2. An asymmetric dimethylarginine; by host PRMT6 mark is found at Arg52 and Arg53. A Glycyl lysine isopeptide (Lys-Gly) (interchain with G-Cter in ubiquitin) cross-link involves residue Lys71. The short motif at 78–80 (RGD) is the Cell attachment site element.

It belongs to the lentiviruses Tat family. In terms of assembly, interacts with host CCNT1. Associates with the P-TEFb complex composed at least of Tat, P-TEFb (CDK9 and CCNT1), TAR RNA, RNA Pol II. Recruits the HATs CREBBP, TAF1/TFIID, EP300, PCAF and GCN5L2. Interacts with host KAT5/Tip60; this interaction targets the latter to degradation. Interacts with the host deacetylase SIRT1. Interacts with host capping enzyme RNGTT; this interaction stimulates RNGTT. Binds to host KDR, and to the host integrins ITGAV/ITGB3 and ITGA5/ITGB1. Interacts with host KPNB1/importin beta-1 without previous binding to KPNA1/importin alpha-1. Interacts with EIF2AK2. Interacts with host nucleosome assembly protein NAP1L1; this interaction may be required for the transport of Tat within the nucleus, since the two proteins interact at the nuclear rim. Interacts with host C1QBP/SF2P32; this interaction involves lysine-acetylated Tat. Interacts with the host chemokine receptors CCR2, CCR3 and CXCR4. Interacts with host DPP4/CD26; this interaction may trigger an anti-proliferative effect. Interacts with host LDLR. Interacts with the host extracellular matrix metalloproteinase MMP1. Interacts with host PRMT6; this interaction mediates Tat's methylation. Interacts with, and is ubiquitinated by MDM2/Hdm2. Interacts with host PSMC3 and HTATIP2. Interacts with STAB1; this interaction may overcome SATB1-mediated repression of IL2 and IL2RA (interleukin) in T cells by binding to the same domain than HDAC1. Interacts (when acetylated) with human CDK13, thereby increasing HIV-1 mRNA splicing and promoting the production of the doubly spliced HIV-1 protein Nef. Interacts with host TBP; this interaction modulates the activity of transcriptional pre-initiation complex. Interacts with host RELA. Interacts with host PLSCR1; this interaction negatively regulates Tat transactivation activity by altering its subcellular distribution. Asymmetrical arginine methylation by host PRMT6 seems to diminish the transactivation capacity of Tat and affects the interaction with host CCNT1. In terms of processing, acetylation by EP300, CREBBP, GCN5L2/GCN5 and PCAF regulates the transactivation activity of Tat. EP300-mediated acetylation of Lys-50 promotes dissociation of Tat from the TAR RNA through the competitive binding to PCAF's bromodomain. In addition, the non-acetylated Tat's N-terminus can also interact with PCAF. PCAF-mediated acetylation of Lys-28 enhances Tat's binding to CCNT1. Lys-50 is deacetylated by SIRT1. Post-translationally, polyubiquitination by host MDM2 does not target Tat to degradation, but activates its transactivation function and fosters interaction with CCNT1 and TAR RNA. Phosphorylated by EIF2AK2 on serine and threonine residues adjacent to the basic region important for TAR RNA binding and function. Phosphorylation of Tat by EIF2AK2 is dependent on the prior activation of EIF2AK2 by dsRNA.

Its subcellular location is the host nucleus. It localises to the host nucleolus. It is found in the host cytoplasm. The protein localises to the secreted. Its function is as follows. Transcriptional activator that increases RNA Pol II processivity, thereby increasing the level of full-length viral transcripts. Recognizes a hairpin structure at the 5'-LTR of the nascent viral mRNAs referred to as the transactivation responsive RNA element (TAR) and recruits the cyclin T1-CDK9 complex (P-TEFb complex) that will in turn hyperphosphorylate the RNA polymerase II to allow efficient elongation. The CDK9 component of P-TEFb and other Tat-activated kinases hyperphosphorylate the C-terminus of RNA Pol II that becomes stabilized and much more processive. Other factors such as HTATSF1/Tat-SF1, SUPT5H/SPT5, and HTATIP2 are also important for Tat's function. Besides its effect on RNA Pol II processivity, Tat induces chromatin remodeling of proviral genes by recruiting the histone acetyltransferases (HATs) CREBBP, EP300 and PCAF to the chromatin. This also contributes to the increase in proviral transcription rate, especially when the provirus integrates in transcriptionally silent region of the host genome. To ensure maximal activation of the LTR, Tat mediates nuclear translocation of NF-kappa-B by interacting with host RELA. Through its interaction with host TBP, Tat may also modulate transcription initiation. Tat can reactivate a latently infected cell by penetrating in it and transactivating its LTR promoter. In the cytoplasm, Tat is thought to act as a translational activator of HIV-1 mRNAs. Functionally, extracellular circulating Tat can be endocytosed by surrounding uninfected cells via the binding to several surface receptors such as CD26, CXCR4, heparan sulfate proteoglycans (HSPG) or LDLR. Neurons are rarely infected, but they internalize Tat via their LDLR. Through its interaction with nuclear HATs, Tat is potentially able to control the acetylation-dependent cellular gene expression. Modulates the expression of many cellular genes involved in cell survival, proliferation or in coding for cytokines or cytokine receptors. Tat plays a role in T-cell and neurons apoptosis. Tat induced neurotoxicity and apoptosis probably contribute to neuroAIDS. Circulating Tat also acts as a chemokine-like and/or growth factor-like molecule that binds to specific receptors on the surface of the cells, affecting many cellular pathways. In the vascular system, Tat binds to ITGAV/ITGB3 and ITGA5/ITGB1 integrins dimers at the surface of endothelial cells and competes with bFGF for heparin-binding sites, leading to an excess of soluble bFGF. In Homo sapiens (Human), this protein is Protein Tat.